A 327-amino-acid chain; its full sequence is rRNA 2'-O-methyltransferase fibrillarin (327 aa).

Residues 1–93 (MKPGFSPRGG…RGNQSGKNVM (93 aa)) are disordered. Residues 7–80 (PRGGGFGGRG…GGGRGRGGGR (74 aa)) show a composition bias toward gly residues. Residues arginine 8, arginine 15, arginine 21, arginine 24, arginine 28, and arginine 31 each carry the asymmetric dimethylarginine modification. Residues lysine 90, lysine 108, and lysine 115 each participate in a glycyl lysine isopeptide (Lys-Gly) (interchain with G-Cter in SUMO2) cross-link. Lysine 108 carries the post-translational modification N6-acetyllysine. Serine 122 is modified (phosphoserine). N6-acetyllysine is present on lysine 127. A phosphoserine mark is found at serine 130 and serine 132. Glycyl lysine isopeptide (Lys-Gly) (interchain with G-Cter in SUMO2) cross-links involve residues lysine 137, lysine 149, and lysine 164. S-adenosyl-L-methionine contacts are provided by residues 178 to 179 (TT) and 197 to 198 (EF). N6-acetyllysine occurs at positions 211 and 212. S-adenosyl-L-methionine contacts are provided by residues 222-223 (DA) and 242-245 (DVAQ).

Belongs to the methyltransferase superfamily. Fibrillarin family. As to quaternary structure, component of box C/D small nucleolar ribonucleoprotein (snoRNP) particles that contain SNU13, FBL, NOP5 and NOP56, plus a guide RNA. It is associated with the U3, U8, U13, X and Y small nuclear RNAs. Component of several ribosomal and nucleolar protein complexes. Part of the small subunit (SSU) processome, composed of more than 70 proteins and the RNA chaperone small nucleolar RNA (snoRNA) U3. Interacts with PRMT5 and UTP20. Interacts with DDX5 and C1QBP. Interacts with NOL11. Interacts with PIH1D1. Interacts with RRP1B. Interacts with NOLC1. Interacts with SDE2. Interacts with NOP2 and NOP56. Ubiquitinated. Ubiquitination leads to proteasomal degradation. Deubiquitinated by USP36. In terms of processing, by homology to other fibrillarins, some or all of the N-terminal domain arginines are modified to asymmetric dimethylarginine (DMA). Post-translationally, acetylated by CREBBP/CBP, preventing methylation of 'Gln-105' of histone H2A (H2AQ104me), without affecting rRNA methylation. Deacetylation by SIRT7 restores methylation of 'Gln-105' of histone H2A (H2AQ104me).

The protein localises to the nucleus. Its subcellular location is the nucleolus. It is found in the nucleoplasm. It catalyses the reaction L-glutaminyl-[histone H2A] + S-adenosyl-L-methionine = N(5)-methyl-L-glutaminyl-[histone H2A] + S-adenosyl-L-homocysteine + H(+). The enzyme catalyses a ribonucleotide in rRNA + S-adenosyl-L-methionine = a 2'-O-methylribonucleotide in rRNA + S-adenosyl-L-homocysteine + H(+). It carries out the reaction a ribonucleotide in U6 snRNA + S-adenosyl-L-methionine = a 2'-O-methylribonucleotide in U6 snRNA + S-adenosyl-L-homocysteine + H(+). S-adenosyl-L-methionine-dependent methyltransferase that has the ability to methylate both RNAs and proteins. Involved in pre-rRNA processing by catalyzing the site-specific 2'-hydroxyl methylation of ribose moieties in pre-ribosomal RNA. Site specificity is provided by a guide RNA that base pairs with the substrate. Methylation occurs at a characteristic distance from the sequence involved in base pairing with the guide RNA. Probably catalyzes 2'-O-methylation of U6 snRNAs in box C/D RNP complexes. U6 snRNA 2'-O-methylation is required for mRNA splicing fidelity. Also acts as a protein methyltransferase by mediating methylation of 'Gln-105' of histone H2A (H2AQ104me), a modification that impairs binding of the FACT complex and is specifically present at 35S ribosomal DNA locus. Part of the small subunit (SSU) processome, first precursor of the small eukaryotic ribosomal subunit. During the assembly of the SSU processome in the nucleolus, many ribosome biogenesis factors, an RNA chaperone and ribosomal proteins associate with the nascent pre-rRNA and work in concert to generate RNA folding, modifications, rearrangements and cleavage as well as targeted degradation of pre-ribosomal RNA by the RNA exosome. This Rattus norvegicus (Rat) protein is rRNA 2'-O-methyltransferase fibrillarin (Fbl).